The sequence spans 258 residues: UPF0246 protein YaaA (258 aa).

It belongs to the UPF0246 family.

The protein is UPF0246 protein YaaA of Shigella boydii serotype 18 (strain CDC 3083-94 / BS512).